Consider the following 1266-residue polypeptide: Intermembrane phospholipid transporter YhdP (1266 aa).

The Cytoplasmic portion of the chain corresponds to 1-5 (MRRLP). A helical membrane pass occupies residues 6–26 (GILLLTGAALVVIAALLVSGL). The Periplasmic segment spans residues 27 to 1266 (RIALPHLDAW…LRQPRKEKAQ (1240 aa)). A P-helix region spans residues 94 to 103 (VWQSLLHMRW). The segment at 1121-1144 (HAGQLLRLLSVDALMRKLRFDFRD) is C-helix_2. The segment at 1203–1237 (ISATVGVAAAFAVNPIVGAAVFAASKVLGPLWSKV) is C-helix_1.

Its subcellular location is the cell inner membrane. In terms of biological role, involved in outer membrane lipid homeostasis. Likely transports phospholipids between the inner membrane and the outer membrane. It would provide a bridge-like structure that protects phospholipids as they travel across the periplasm. The phosphate-containing molecules are captured along the length of a hydrophobic groove that is continuous along all but the extreme N-terminus of the protein. It also appears to control, directly or indirectly, levels of cyclic enterobacterial common antigen (cyclic ECA), a soluble cyclic ECA molecule present in the periplasm. TamB, YdbH and YhdP are redundant, but not equivalent, in performing an essential function for growth and maintaining lipid homeostasis in the outer membrane. The transport functions of TamB and YhdP could be differentiated according to the fatty acid saturation state of the phospholipids, with TamB transporting more unsaturated phospholipids and YhdP more saturated phospholipids. Any of these three proteins is sufficient for growth. The protein is Intermembrane phospholipid transporter YhdP (yhdP) of Escherichia coli (strain K12).